A 183-amino-acid chain; its full sequence is Gamma-crystallin N-A (183 aa).

Beta/gamma crystallin 'Greek key' domains follow at residues 6–46 (GKIV…RVES), 47–89 (GAWV…KPIK), 95–136 (YRME…KVYG), and 138–180 (GAWA…RRVV).

It belongs to the beta/gamma-crystallin family. Monomer.

Crystallins are the dominant structural components of the vertebrate eye lens. The protein is Gamma-crystallin N-A (crygna) of Danio rerio (Zebrafish).